A 602-amino-acid chain; its full sequence is Zinc finger protein 652-B (602 aa).

Residues 60 to 232 (FQDSKPTNEV…PSDKAKSEEK (173 aa)) are disordered. The span at 65-79 (PTNEVHAVKGERENS) shows a compositional bias: basic and acidic residues. Composition is skewed to acidic residues over residues 80–108 (GESE…DEDE) and 148–167 (DDEG…DEEN). Positions 222–232 (SPSDKAKSEEK) are enriched in basic and acidic residues. The C2H2-type 1 zinc finger occupies 235–258 (LTCDKCPRVFNTRWYLEKHMNVTH). A C2H2-type 2; degenerate zinc finger spans residues 262 to 284 (QICDKCGKKFVLESELSLHLQTD). 6 C2H2-type zinc fingers span residues 289 to 312 (IQCI…KIVH), 319 to 341 (FSCE…LVAH), 347 to 369 (FTCE…SLQH), 375 to 397 (FRCE…MSIH), 403 to 425 (FMCQ…MKTH), and 431 to 453 (FICE…RRTH). The C2H2-type 9; degenerate zinc finger occupies 459-482 (YPCDVCGMRFRFSNMLKAHKEKCF). The disordered stretch occupies residues 543-575 (PFSHLHLHPHSHTHHLAVPPVPHLPPPPALFKS). A compositionally biased stretch (basic residues) spans 545 to 557 (SHLHLHPHSHTHH). A compositionally biased stretch (pro residues) spans 561-571 (PPVPHLPPPPA).

It belongs to the krueppel C2H2-type zinc-finger protein family.

It is found in the nucleus. Its function is as follows. May be involved in transcriptional regulation. This is Zinc finger protein 652-B (znf652-b) from Xenopus laevis (African clawed frog).